A 1211-amino-acid chain; its full sequence is DNA polymerase beta (1211 aa).

Tandem repeats lie at residues 1074–1077 (KPAG), 1078–1081 (KPAG), 1082–1085 (NPAG), and 1086–1089 (NPAG). The 4 X 4 AA tandem repeats of [NK]-[P]-A-G stretch occupies residues 1074-1089 (KPAGKPAGNPAGNPAG).

This sequence belongs to the DNA polymerase type-B family.

The catalysed reaction is DNA(n) + a 2'-deoxyribonucleoside 5'-triphosphate = DNA(n+1) + diphosphate. DNA-directed DNA polymerase involved in viral DNA replication. The chain is DNA polymerase beta (DPOL) from African swine fever virus (strain Badajoz 1971 Vero-adapted) (Ba71V).